The primary structure comprises 370 residues: ABSCISIC ACID-INSENSITIVE 5-like protein 8 (370 aa).

A phosphoserine mark is found at Ser25, Ser44, and Ser69. The segment at 56-77 (SAEETQEGSQRQGSTTLPPTLS) is disordered. Residues 62–77 (EGSQRQGSTTLPPTLS) are compositionally biased toward polar residues. Thr111 carries the phosphothreonine modification. A compositionally biased stretch (polar residues) spans 260–278 (ESSLLSPSPYISNGSTSTR). A disordered region spans residues 260–281 (ESSLLSPSPYISNGSTSTRGGK). A bZIP domain is found at 293–356 (VDKKLRRKIK…MEPGMISLHE (64 aa)). The tract at residues 295–314 (KKLRRKIKNRESAARSRARK) is basic motif. The leucine-zipper stretch occupies residues 328 to 342 (LKKDYEELLKQHVEL). A disordered region spans residues 349-370 (PGMISLHERPERKLRRTKSDIK). Residues 354–370 (LHERPERKLRRTKSDIK) are compositionally biased toward basic and acidic residues.

The protein belongs to the bZIP family. ABI5 subfamily. As to quaternary structure, DNA-binding heterodimer.

It localises to the nucleus. Could participate in abscisic acid-regulated gene expression. This Arabidopsis thaliana (Mouse-ear cress) protein is ABSCISIC ACID-INSENSITIVE 5-like protein 8 (BZIP15).